Here is a 553-residue protein sequence, read N- to C-terminus: ATP synthase F(1) complex subunit alpha, mitochondrial (553 aa).

Residues 1 to 43 (MLSVRVAAAVARALPRRAGLVSKNALGSSFVAARNLHASNTRL) constitute a mitochondrion transit peptide. 2 positions are modified to phosphoserine: serine 53 and serine 65. Position 76 is a phosphoserine; alternate (serine 76). Residue serine 76 is glycosylated (O-linked (GlcNAc) serine; alternate). Residue serine 106 is modified to Phosphoserine. 3 positions are modified to N6-acetyllysine: lysine 123, lysine 126, and lysine 132. Phosphothreonine is present on threonine 134. Lysine 161 is modified (N6-acetyllysine; alternate). Lysine 161 bears the N6-succinyllysine; alternate mark. Serine 166 carries the post-translational modification Phosphoserine. N6-acetyllysine; alternate is present on lysine 167. Lysine 167 is modified (N6-succinyllysine; alternate). Residue serine 184 is modified to Phosphoserine. The residue at position 204 (arginine 204) is an Omega-N-methylarginine. ATP contacts are provided by glutamine 215, glycine 217, lysine 218, threonine 219, and serine 220. Threonine 219 is a binding site for Mg(2+). Residues lysine 230 and lysine 239 each carry the N6-acetyllysine; alternate modification. An N6-succinyllysine; alternate mark is found at lysine 230 and lysine 239. Lysine 240 carries the N6-acetyllysine modification. N6-acetyllysine; alternate is present on residues lysine 261 and lysine 305. Lysine 261 and lysine 305 each carry N6-succinyllysine; alternate. Aspartate 312 serves as a coordination point for Mg(2+). Position 427 is an N6-acetyllysine; alternate (lysine 427). Lysine 427 carries the post-translational modification N6-succinyllysine; alternate. Lysine 434 carries the post-translational modification N6-acetyllysine. 2 residues coordinate ATP: glutamine 473 and glutamine 475. N6-acetyllysine; alternate occurs at positions 498, 506, 531, and 539. N6-succinyllysine; alternate is present on residues lysine 498, lysine 506, lysine 531, and lysine 539. N6-acetyllysine is present on lysine 541.

The protein belongs to the ATPase alpha/beta chains family. In terms of assembly, homotrimer. Component of the ATP synthase complex composed at least of ATP5F1A/subunit alpha, ATP5F1B/subunit beta, ATP5MC1/subunit c (homooctomer), MT-ATP6/subunit a, MT-ATP8/subunit 8, ATP5ME/subunit e, ATP5MF/subunit f, ATP5MG/subunit g, ATP5MK/subunit k, ATP5MJ/subunit j, ATP5F1C/subunit gamma, ATP5F1D/subunit delta, ATP5F1E/subunit epsilon, ATP5PF/subunit F6, ATP5PB/subunit b, ATP5PD/subunit d, ATP5PO/subunit OSCP. ATP synthase complex consists of a soluble F(1) head domain (subunits alpha(3) and beta(3)) - the catalytic core - and a membrane F(0) domain - the membrane proton channel (subunits c, a, 8, e, f, g, k and j). These two domains are linked by a central stalk (subunits gamma, delta, and epsilon) rotating inside the F1 region and a stationary peripheral stalk (subunits F6, b, d, and OSCP). Interacts with ATPAF2. Interacts with HRG; the interaction occurs on the surface of T-cells and alters the cell morphology when associated with concanavalin (in vitro). Interacts with PLG (angiostatin peptide); the interaction inhibits most of the angiogenic properties of angiostatin. Interacts with BLOC1S1. Interacts with BCL2L1 isoform BCL-X(L); the interaction mediates the association of BCL2L1 isoform BCL-X(L) with the mitochondrial membrane F(1)F(0) ATP synthase and enhances neurons metabolic efficiency. Interacts with CLN5 and PPT1. Interacts with S100A1; this interaction increases F1-ATPase activity. Interacts with ABCB7; this interaction allows the regulation of cellular iron homeostasis and cellular reactive oxygen species (ROS) levels in cardiomyocytes. Post-translationally, acetylated on lysine residues. BLOC1S1 is required for acetylation. In terms of tissue distribution, expressed in heart (at protein level).

It is found in the mitochondrion. It localises to the mitochondrion inner membrane. The protein localises to the cell membrane. Subunit alpha, of the mitochondrial membrane ATP synthase complex (F(1)F(0) ATP synthase or Complex V) that produces ATP from ADP in the presence of a proton gradient across the membrane which is generated by electron transport complexes of the respiratory chain. ATP synthase complex consist of a soluble F(1) head domain - the catalytic core - and a membrane F(1) domain - the membrane proton channel. These two domains are linked by a central stalk rotating inside the F(1) region and a stationary peripheral stalk. During catalysis, ATP synthesis in the catalytic domain of F(1) is coupled via a rotary mechanism of the central stalk subunits to proton translocation. In vivo, can only synthesize ATP although its ATP hydrolase activity can be activated artificially in vitro. With the catalytic subunit beta (ATP5F1B), forms the catalytic core in the F(1) domain. Subunit alpha does not bear the catalytic high-affinity ATP-binding sites. In Sus scrofa (Pig), this protein is ATP synthase F(1) complex subunit alpha, mitochondrial.